A 109-amino-acid chain; its full sequence is Small ribosomal subunit protein uS15c (109 aa).

It belongs to the universal ribosomal protein uS15 family. In terms of assembly, part of the 30S ribosomal subunit.

Its subcellular location is the plastid. The protein localises to the chloroplast. In Trachelium caeruleum (Blue throatwort), this protein is Small ribosomal subunit protein uS15c (rps15-A).